A 554-amino-acid polypeptide reads, in one-letter code: CTP synthase (554 aa).

The amidoligase domain stretch occupies residues 1 to 265 (MTPLIFVTGG…DELVIDQFKL (265 aa)). Residue S13 coordinates CTP. S13 contributes to the UTP binding site. Residues 14-19 (SLGKGI) and D71 contribute to the ATP site. 2 residues coordinate Mg(2+): D71 and E139. CTP-binding positions include 146 to 148 (DIE), 186 to 191 (KTKPTQ), and K222. UTP contacts are provided by residues 186–191 (KTKPTQ) and K222. Residues 292-545 (NIAVVGKYVD…VRAAREKKAG (254 aa)) form the Glutamine amidotransferase type-1 domain. Residue G353 coordinates L-glutamine. C380 acts as the Nucleophile; for glutamine hydrolysis in catalysis. L-glutamine is bound by residues 381 to 384 (YGMQ), E404, and R471. Active-site residues include H518 and E520.

This sequence belongs to the CTP synthase family. Homotetramer.

It carries out the reaction UTP + L-glutamine + ATP + H2O = CTP + L-glutamate + ADP + phosphate + 2 H(+). The enzyme catalyses L-glutamine + H2O = L-glutamate + NH4(+). The catalysed reaction is UTP + NH4(+) + ATP = CTP + ADP + phosphate + 2 H(+). The protein operates within pyrimidine metabolism; CTP biosynthesis via de novo pathway; CTP from UDP: step 2/2. Its activity is regulated as follows. Allosterically activated by GTP, when glutamine is the substrate; GTP has no effect on the reaction when ammonia is the substrate. The allosteric effector GTP functions by stabilizing the protein conformation that binds the tetrahedral intermediate(s) formed during glutamine hydrolysis. Inhibited by the product CTP, via allosteric rather than competitive inhibition. Its function is as follows. Catalyzes the ATP-dependent amination of UTP to CTP with either L-glutamine or ammonia as the source of nitrogen. Regulates intracellular CTP levels through interactions with the four ribonucleotide triphosphates. This chain is CTP synthase, found in Xanthomonas axonopodis pv. citri (strain 306).